A 60-amino-acid polypeptide reads, in one-letter code: Small ribosomal subunit protein bS21 (60 aa).

The segment at 36–60 is disordered; the sequence is QFFETPQEKHKRKEATRRRQRSRRR. The span at 44-60 shows a compositional bias: basic residues; it reads KHKRKEATRRRQRSRRR.

It belongs to the bacterial ribosomal protein bS21 family.

The polypeptide is Small ribosomal subunit protein bS21 (rpsU) (Synechocystis sp. (strain ATCC 27184 / PCC 6803 / Kazusa)).